Consider the following 355-residue polypeptide: Diacylglycerol O-acyltransferase 2A (355 aa).

2 consecutive transmembrane segments (helical) span residues 41-61 (LLWCSMMSICMFIFFFLCSIP) and 62-78 (VLLWFPIILYLTWILVW). N142 is a glycosylation site (N-linked (GlcNAc...) asparagine).

The protein belongs to the diacylglycerol acyltransferase family.

It localises to the endoplasmic reticulum membrane. The catalysed reaction is an acyl-CoA + a 1,2-diacyl-sn-glycerol = a triacyl-sn-glycerol + CoA. The protein operates within glycerolipid metabolism; triacylglycerol biosynthesis. Functionally, catalyzes the terminal and only committed step in triacylglycerol synthesis by using diacylglycerol and fatty acyl CoA as substrates. Required for storage lipid synthesis. In Umbelopsis ramanniana (Oleaginous fungus), this protein is Diacylglycerol O-acyltransferase 2A (DGAT2A).